The chain runs to 524 residues: Putative ATP-dependent RNA helicase R458 (524 aa).

The Helicase ATP-binding domain occupies 125–338 (VPELIQRKDT…NSYFRKYSPI (214 aa)). Residue 138–145 (FKSGTGKT) coordinates ATP. A DEFD box motif is present at residues 268-271 (DEFD). One can recognise a Helicase C-terminal domain in the interval 373 to 524 (IILDLLKQCR…QLPGDLSTLL (152 aa)).

It belongs to the DEAD box helicase family. eIF4A subfamily.

It catalyses the reaction ATP + H2O = ADP + phosphate + H(+). Its function is as follows. Putative ATP-dependent RNA helicase. The chain is Putative ATP-dependent RNA helicase R458 from Acanthamoeba polyphaga mimivirus (APMV).